Here is a 250-residue protein sequence, read N- to C-terminus: Leucyl/phenylalanyl-tRNA--protein transferase (250 aa).

Positions 1–21 (MTPFRRPTVLGTSASAPFPPA) are disordered.

Belongs to the L/F-transferase family.

The protein resides in the cytoplasm. It carries out the reaction N-terminal L-lysyl-[protein] + L-leucyl-tRNA(Leu) = N-terminal L-leucyl-L-lysyl-[protein] + tRNA(Leu) + H(+). The enzyme catalyses N-terminal L-arginyl-[protein] + L-leucyl-tRNA(Leu) = N-terminal L-leucyl-L-arginyl-[protein] + tRNA(Leu) + H(+). The catalysed reaction is L-phenylalanyl-tRNA(Phe) + an N-terminal L-alpha-aminoacyl-[protein] = an N-terminal L-phenylalanyl-L-alpha-aminoacyl-[protein] + tRNA(Phe). In terms of biological role, functions in the N-end rule pathway of protein degradation where it conjugates Leu, Phe and, less efficiently, Met from aminoacyl-tRNAs to the N-termini of proteins containing an N-terminal arginine or lysine. The sequence is that of Leucyl/phenylalanyl-tRNA--protein transferase from Xanthomonas euvesicatoria pv. vesicatoria (strain 85-10) (Xanthomonas campestris pv. vesicatoria).